The primary structure comprises 405 residues: Deoxyguanosinetriphosphate triphosphohydrolase-like protein (405 aa).

Residues Arg-75–Asn-219 form the HD domain.

Belongs to the dGTPase family. Type 2 subfamily.

In Agrobacterium fabrum (strain C58 / ATCC 33970) (Agrobacterium tumefaciens (strain C58)), this protein is Deoxyguanosinetriphosphate triphosphohydrolase-like protein.